Reading from the N-terminus, the 132-residue chain is Fatty acid-binding protein 1 (132 aa).

Position 2 is an N-acetylalanine (Ala-2).

The protein belongs to the calycin superfamily. Fatty-acid binding protein (FABP) family.

This chain is Fatty acid-binding protein 1 (FABP-1), found in Fasciola gigantica (Giant liver fluke).